The primary structure comprises 571 residues: Proline--tRNA ligase (571 aa).

This sequence belongs to the class-II aminoacyl-tRNA synthetase family. ProS type 1 subfamily. Homodimer.

The protein resides in the cytoplasm. The catalysed reaction is tRNA(Pro) + L-proline + ATP = L-prolyl-tRNA(Pro) + AMP + diphosphate. Catalyzes the attachment of proline to tRNA(Pro) in a two-step reaction: proline is first activated by ATP to form Pro-AMP and then transferred to the acceptor end of tRNA(Pro). As ProRS can inadvertently accommodate and process non-cognate amino acids such as alanine and cysteine, to avoid such errors it has two additional distinct editing activities against alanine. One activity is designated as 'pretransfer' editing and involves the tRNA(Pro)-independent hydrolysis of activated Ala-AMP. The other activity is designated 'posttransfer' editing and involves deacylation of mischarged Ala-tRNA(Pro). The misacylated Cys-tRNA(Pro) is not edited by ProRS. This is Proline--tRNA ligase from Shewanella putrefaciens (strain CN-32 / ATCC BAA-453).